Here is a 152-residue protein sequence, read N- to C-terminus: Probable spermine N(1)-acetyltransferase (152 aa).

The 150-residue stretch at 3–152 (INIKAVTDDN…NGEKVMVKEL (150 aa)) folds into the N-acetyltransferase domain. Residues 82 to 84 (FFI), 89 to 95 (QGKGLGK), and 122 to 131 (NIHAIRLYQR) each bind acetyl-CoA. Catalysis depends on Y129, which acts as the Proton donor.

The protein belongs to the acetyltransferase family.

It catalyses the reaction an alkane-alpha,omega-diamine + acetyl-CoA = an N-acetylalkane-alpha,omega-diamine + CoA + H(+). It carries out the reaction spermine + acetyl-CoA = N(1)-acetylspermine + CoA + H(+). It participates in amine and polyamine degradation; spermine degradation. Its function is as follows. Probably acetylates spermine to N(1)-acetylspermine. The protein is Probable spermine N(1)-acetyltransferase of Bacillus subtilis subsp. natto (strain BEST195).